Here is a 101-residue protein sequence, read N- to C-terminus: Ribonuclease kappa-A (101 aa).

2 consecutive transmembrane segments (helical) span residues 13 to 33 and 68 to 88; these read ACGIVISVWGVIMLILLGVFF and VSYNCFIAAAIYIVLGGFSFC.

Belongs to the RNase K family.

Its subcellular location is the membrane. Endoribonuclease which preferentially cleaves ApU and ApG phosphodiester bonds. The sequence is that of Ribonuclease kappa-A (rnasek-a) from Xenopus laevis (African clawed frog).